A 696-amino-acid chain; its full sequence is HIPL2 protein (696 aa).

The first 24 residues, 1 to 24 (MAKTNQAITICSLLLLLLLSETTS), serve as a signal peptide directing secretion. N-linked (GlcNAc...) asparagine glycans are attached at residues asparagine 38, asparagine 69, asparagine 74, asparagine 108, asparagine 124, asparagine 148, asparagine 175, asparagine 339, asparagine 431, asparagine 513, asparagine 519, asparagine 528, asparagine 581, and asparagine 651. Serine 672 carries the GPI-anchor amidated serine lipid modification. Residues 673 to 696 (SARKLCFSVFLLLSLLMMFLTLLD) constitute a propeptide, removed in mature form.

Belongs to the PQQ oxidoreductase GdhB family. Pyrroloquinoline quinone serves as cofactor.

The protein resides in the cell membrane. The chain is HIPL2 protein (HIPL2) from Arabidopsis thaliana (Mouse-ear cress).